Reading from the N-terminus, the 170-residue chain is Peroxidase 2 (170 aa).

Asn-9 is a glycosylation site (N-linked (GlcNAc...) asparagine). Position 24 (His-24) interacts with heme b. Residue Thr-25 participates in Ca(2+) binding. Cysteines 31 and 59 form a disulfide. Ca(2+) contacts are provided by Asp-73, Thr-76, and Asp-81.

Belongs to the peroxidase family. Classical plant (class III) peroxidase subfamily. Requires Ca(2+) as cofactor. The cofactor is heme b.

It catalyses the reaction 2 a phenolic donor + H2O2 = 2 a phenolic radical donor + 2 H2O. Functionally, removal of H(2)O(2), oxidation of toxic reductants, biosynthesis and degradation of lignin, suberization, auxin catabolism, response to environmental stresses such as wounding, pathogen attack and oxidative stress. These functions might be dependent on each isozyme/isoform in each plant tissue. In terms of biological role, involved in defense response to powdery meldew fungus. The sequence is that of Peroxidase 2 from Hordeum vulgare (Barley).